The primary structure comprises 357 residues: UPF0283 membrane protein HS_0596 (357 aa).

A run of 3 helical transmembrane segments spans residues 67–87 (LMATICLFSCGILAQSVQWLV), 96–116 (IAFVFAMVSLFLVLLGLGAII), and 213–233 (AVESALIVAVSPLAIVDMFFI).

It belongs to the UPF0283 family.

The protein localises to the cell inner membrane. This is UPF0283 membrane protein HS_0596 from Histophilus somni (strain 129Pt) (Haemophilus somnus).